A 291-amino-acid chain; its full sequence is 4-diphosphocytidyl-2-C-methyl-D-erythritol kinase (291 aa).

Residue Lys-10 is part of the active site. 94-104 (PVSAGLAGGSS) is a binding site for ATP. Asp-136 is an active-site residue.

Belongs to the GHMP kinase family. IspE subfamily.

It catalyses the reaction 4-CDP-2-C-methyl-D-erythritol + ATP = 4-CDP-2-C-methyl-D-erythritol 2-phosphate + ADP + H(+). The protein operates within isoprenoid biosynthesis; isopentenyl diphosphate biosynthesis via DXP pathway; isopentenyl diphosphate from 1-deoxy-D-xylulose 5-phosphate: step 3/6. Catalyzes the phosphorylation of the position 2 hydroxy group of 4-diphosphocytidyl-2C-methyl-D-erythritol. The protein is 4-diphosphocytidyl-2-C-methyl-D-erythritol kinase of Listeria innocua serovar 6a (strain ATCC BAA-680 / CLIP 11262).